Consider the following 261-residue polypeptide: uncharacterized protein (261 aa).

41–48 (GKSGSGKS) contacts ATP.

This sequence belongs to the IIV-6 075L family.

This is an uncharacterized protein from Invertebrate iridescent virus 3 (IIV-3).